The following is a 319-amino-acid chain: D-alanine--D-alanine ligase (319 aa).

Residues Met-1–Lys-23 are disordered. Positions Lys-120–Glu-313 constitute an ATP-grasp domain. Met-147–Thr-197 contributes to the ATP binding site. Mg(2+)-binding residues include Asp-264, Glu-280, and Asn-282.

Belongs to the D-alanine--D-alanine ligase family. Mg(2+) serves as cofactor. The cofactor is Mn(2+).

It is found in the cytoplasm. The enzyme catalyses 2 D-alanine + ATP = D-alanyl-D-alanine + ADP + phosphate + H(+). It functions in the pathway cell wall biogenesis; peptidoglycan biosynthesis. In terms of biological role, cell wall formation. This is D-alanine--D-alanine ligase from Roseobacter denitrificans (strain ATCC 33942 / OCh 114) (Erythrobacter sp. (strain OCh 114)).